We begin with the raw amino-acid sequence, 381 residues long: Glycerol-3-phosphate dehydrogenase [NAD(+)] (381 aa).

Residues 1 to 27 (MTAMDRLDHVSNQLAAKRQKKNPEGKP) form a disordered region. Residues 34–39 (GSGNWG), Phe66, and Phe122 contribute to the NAD(+) site. Lys145 contributes to the substrate binding site. Residue Ala178 participates in NAD(+) binding. Residue Lys238 is the Proton acceptor of the active site. Residues Arg303 and Gln332 each coordinate NAD(+). Position 303-304 (303-304 (RN)) interacts with substrate.

The protein belongs to the NAD-dependent glycerol-3-phosphate dehydrogenase family.

The enzyme catalyses sn-glycerol 3-phosphate + NAD(+) = dihydroxyacetone phosphate + NADH + H(+). The chain is Glycerol-3-phosphate dehydrogenase [NAD(+)] (GPD) from Pichia angusta (Yeast).